Reading from the N-terminus, the 391-residue chain is Succinyl-diaminopimelate desuccinylase (391 aa).

His-78 is a Zn(2+) binding site. The active site involves Asp-80. Asp-111 contacts Zn(2+). The Proton acceptor role is filled by Glu-145. Zn(2+)-binding residues include Glu-146, Glu-174, and His-360.

It belongs to the peptidase M20A family. DapE subfamily. In terms of assembly, homodimer. Requires Zn(2+) as cofactor. It depends on Co(2+) as a cofactor.

The catalysed reaction is N-succinyl-(2S,6S)-2,6-diaminopimelate + H2O = (2S,6S)-2,6-diaminopimelate + succinate. The protein operates within amino-acid biosynthesis; L-lysine biosynthesis via DAP pathway; LL-2,6-diaminopimelate from (S)-tetrahydrodipicolinate (succinylase route): step 3/3. Catalyzes the hydrolysis of N-succinyl-L,L-diaminopimelic acid (SDAP), forming succinate and LL-2,6-diaminopimelate (DAP), an intermediate involved in the bacterial biosynthesis of lysine and meso-diaminopimelic acid, an essential component of bacterial cell walls. This chain is Succinyl-diaminopimelate desuccinylase, found in Albidiferax ferrireducens (strain ATCC BAA-621 / DSM 15236 / T118) (Rhodoferax ferrireducens).